We begin with the raw amino-acid sequence, 345 residues long: Anthranilate phosphoribosyltransferase (345 aa).

5-phospho-alpha-D-ribose 1-diphosphate is bound by residues Gly-79, 82–83 (GD), Thr-87, 89–92 (NVST), 106–114 (KHGNRAVSG), and Ser-118. Position 79 (Gly-79) interacts with anthranilate. A Mg(2+)-binding site is contributed by Ser-91. Anthranilate is bound at residue Asn-109. Position 164 (Arg-164) interacts with anthranilate. Mg(2+) contacts are provided by Asp-223 and Glu-224.

This sequence belongs to the anthranilate phosphoribosyltransferase family. Homodimer. Requires Mg(2+) as cofactor.

It catalyses the reaction N-(5-phospho-beta-D-ribosyl)anthranilate + diphosphate = 5-phospho-alpha-D-ribose 1-diphosphate + anthranilate. It functions in the pathway amino-acid biosynthesis; L-tryptophan biosynthesis; L-tryptophan from chorismate: step 2/5. Catalyzes the transfer of the phosphoribosyl group of 5-phosphorylribose-1-pyrophosphate (PRPP) to anthranilate to yield N-(5'-phosphoribosyl)-anthranilate (PRA). In Saccharolobus islandicus (strain L.S.2.15 / Lassen #1) (Sulfolobus islandicus), this protein is Anthranilate phosphoribosyltransferase.